The chain runs to 287 residues: Orotidine 5'-phosphate decarboxylase (287 aa).

The Proton donor role is filled by Lys-97.

Belongs to the OMP decarboxylase family. Type 2 subfamily.

The catalysed reaction is orotidine 5'-phosphate + H(+) = UMP + CO2. Its pathway is pyrimidine metabolism; UMP biosynthesis via de novo pathway; UMP from orotate: step 2/2. The sequence is that of Orotidine 5'-phosphate decarboxylase (pyrF) from Clostridium perfringens (strain 13 / Type A).